An 87-amino-acid chain; its full sequence is Keratin-associated protein 7-1 (87 aa).

Positions 43-84 (GCGCNGYSSLGYSFGGSNINNLGGCYGGSFYRPWGSGSGFGY) are 11 X 2 AA repeats of G-[YCGS].

The protein belongs to the KRTAP type 7 family. As to quaternary structure, interacts with hair keratins. As to expression, expressed in the upper portion of the hair cortex.

In the hair cortex, hair keratin intermediate filaments are embedded in an interfilamentous matrix, consisting of hair keratin-associated proteins (KRTAP), which are essential for the formation of a rigid and resistant hair shaft through their extensive disulfide bond cross-linking with abundant cysteine residues of hair keratins. The matrix proteins include the high-sulfur and high-glycine-tyrosine keratins. This is Keratin-associated protein 7-1 (KRTAP7-1) from Homo sapiens (Human).